A 347-amino-acid chain; its full sequence is Large ribosomal subunit protein uL3 (347 aa).

Residues Arg-325–Gln-347 are disordered.

Belongs to the universal ribosomal protein uL3 family. In terms of assembly, part of the 50S ribosomal subunit. Forms a cluster with proteins L14 and L24e.

Its function is as follows. One of the primary rRNA binding proteins, it binds directly near the 3'-end of the 23S rRNA, where it nucleates assembly of the 50S subunit. This Thermococcus onnurineus (strain NA1) protein is Large ribosomal subunit protein uL3.